The primary structure comprises 138 residues: Basic phospholipase A2 BP-I (138 aa).

The N-terminal stretch at 1–16 is a signal peptide; the sequence is MRTLWIMAVLLLGVDG. 7 disulfide bridges follow: cysteine 42/cysteine 132, cysteine 44/cysteine 60, cysteine 59/cysteine 112, cysteine 65/cysteine 138, cysteine 66/cysteine 105, cysteine 73/cysteine 98, and cysteine 91/cysteine 103. Residues glycine 45 and glycine 47 each coordinate Ca(2+). Histidine 63 is a catalytic residue. The active site involves aspartate 106.

It belongs to the phospholipase A2 family. Group II subfamily. K49 sub-subfamily. The cofactor is Ca(2+). Expressed by the venom gland.

It is found in the secreted. It carries out the reaction a 1,2-diacyl-sn-glycero-3-phosphocholine + H2O = a 1-acyl-sn-glycero-3-phosphocholine + a fatty acid + H(+). Snake venom phospholipase A2 (PLA2) that has strong myotoxic activity with a low phospholipase A2 activity. PLA2 catalyzes the calcium-dependent hydrolysis of the 2-acyl groups in 3-sn-phosphoglycerides. This Protobothrops flavoviridis (Habu) protein is Basic phospholipase A2 BP-I.